The following is a 209-amino-acid chain: Na(+)-translocating NADH-quinone reductase subunit D (209 aa).

5 helical membrane-spanning segments follow: residues 42–62 (LVMTLAVTLVTAFSSFFISLI), 66–86 (IPNSVRIIVQMVIIASLVIVV), 103–123 (VFVGLIITNCIVMGRAEAYAM), 131–151 (FMDGIGNGLGYGVILVLVGFV), and 178–198 (NGLFLLAPSAFFIIGLLIWGL).

Belongs to the NqrDE/RnfAE family. As to quaternary structure, composed of six subunits; NqrA, NqrB, NqrC, NqrD, NqrE and NqrF.

The protein resides in the cell inner membrane. It catalyses the reaction a ubiquinone + n Na(+)(in) + NADH + H(+) = a ubiquinol + n Na(+)(out) + NAD(+). In terms of biological role, NQR complex catalyzes the reduction of ubiquinone-1 to ubiquinol by two successive reactions, coupled with the transport of Na(+) ions from the cytoplasm to the periplasm. NqrA to NqrE are probably involved in the second step, the conversion of ubisemiquinone to ubiquinol. This is Na(+)-translocating NADH-quinone reductase subunit D from Yersinia pseudotuberculosis serotype O:1b (strain IP 31758).